The sequence spans 414 residues: Putative competence-damage inducible protein (414 aa).

It belongs to the CinA family.

The polypeptide is Putative competence-damage inducible protein (Geobacillus kaustophilus (strain HTA426)).